The following is a 479-amino-acid chain: Heparin cofactor 2 (479 aa).

The first 23 residues, 1–23 (MKHPAYTLLLSLIMSMCAGSKGL), serve as a signal peptide directing secretion. Asparagine 31 carries N-linked (GlcNAc...) asparagine glycosylation. 2 repeat units span residues 55–65 (GEEDDDYLDLE) and 69–79 (SEDDDYIYVVD). The segment at 55-79 (GEEDDDYLDLEKLLSEDDDYIYVVD) is 2 X 11 AA approximate repeats, Asp/Glu-rich (acidic) (hirudin-like). 2 positions are modified to sulfotyrosine: tyrosine 61 and tyrosine 74. Residue asparagine 168 is glycosylated (N-linked (GlcNAc...) asparagine). A glycosaminoglycan-binding site region spans residues 172–192 (KYEVTTIHNLFRKLTHRLFRR). N-linked (GlcNAc...) asparagine glycosylation is found at asparagine 367 and asparagine 403.

It belongs to the serpin family. Different composition of the N-linked oligosaccharides appears to yield a 68-kDa and a 72-kDa form.

Its function is as follows. Thrombin inhibitor activated by the glycosaminoglycans, heparin or dermatan sulfate. In the presence of the latter, HC-II becomes the predominant thrombin inhibitor in place of antithrombin III (AT). This is Heparin cofactor 2 (Serpind1) from Rattus norvegicus (Rat).